A 187-amino-acid chain; its full sequence is MLPGLEAAELPADAIEVGRIADAWGIKGWFKVLPYSADPEALFSARRWFLLPAEKGAKTFSGVAQLAIKEAKVHSDTVVASAQAVDDRTAAEALRGARIFVARSSFPSAEKDEYYWVDLIGLNVVNREGVAMGTVKELLSTGAQTVLVLEYSQDGKAQERMIPFVSVYIDEVDLPGHRILVDWQADF.

The PRC barrel domain maps to 111 to 187 (KDEYYWVDLI…RILVDWQADF (77 aa)).

The protein belongs to the RimM family. As to quaternary structure, binds ribosomal protein uS19.

Its subcellular location is the cytoplasm. In terms of biological role, an accessory protein needed during the final step in the assembly of 30S ribosomal subunit, possibly for assembly of the head region. Essential for efficient processing of 16S rRNA. May be needed both before and after RbfA during the maturation of 16S rRNA. It has affinity for free ribosomal 30S subunits but not for 70S ribosomes. This chain is Ribosome maturation factor RimM, found in Albidiferax ferrireducens (strain ATCC BAA-621 / DSM 15236 / T118) (Rhodoferax ferrireducens).